The chain runs to 277 residues: R-spondin-3 (277 aa).

The signal sequence occupies residues 1 to 21; the sequence is MHLRLISCFFIILNFMEYIGS. 2 FU repeats span residues 35–86 and 92–135; these read PNVS…GYYG and INKC…GLEA. Residue Asn36 is glycosylated (N-linked (GlcNAc...) asparagine). 11 disulfides stabilise this stretch: Cys41-Cys48, Cys45-Cys54, Cys57-Cys76, Cys80-Cys95, Cys98-Cys105, Cys102-Cys111, Cys114-Cys125, Cys129-Cys142, Cys148-Cys190, Cys159-Cys166, and Cys199-Cys206. The TSP type-1 domain occupies 147 to 207; it reads HCEASEWSPW…TCIVQRKKCS (61 aa). The interval 210-277 is disordered; it reads ERGKKGRERK…QKSVSVSTVH (68 aa). The segment covering 213–223 has biased composition (basic residues); sequence KKGRERKRKKL. The segment covering 232-245 has biased composition (low complexity); that stretch reads SSSSDSKGLESSIE.

This sequence belongs to the R-spondin family. As to quaternary structure, interacts with the extracellular domain of FZD8 and LRP6. It however does not form a ternary complex with FZD8 and LRP6. Interacts with WNT1. Binds heparin. Interacts with LGR4, LGR5 and LGR6. In terms of tissue distribution, highly expressed in endothelial cells.

Its subcellular location is the secreted. In terms of biological role, activator of the canonical Wnt signaling pathway by acting as a ligand for LGR4-6 receptors, which acts as a key regulator of angiogenesis. Upon binding to LGR4-6 (LGR4, LGR5 or LGR6), LGR4-6 associate with phosphorylated LRP6 and frizzled receptors that are activated by extracellular Wnt receptors, triggering the canonical Wnt signaling pathway to increase expression of target genes. Also regulates the canonical Wnt/beta-catenin-dependent pathway and non-canonical Wnt signaling by acting as an inhibitor of ZNRF3, an important regulator of the Wnt signaling pathway. Acts as a ligand for frizzled FZD8 and LRP6. May negatively regulate the TGF-beta pathway. Acts as a key regulator of angiogenesis by controlling vascular stability and pruning: acts by activating the non-canonical Wnt signaling pathway in endothelial cells. Can also amplify Wnt signaling pathway independently of LGR4-6 receptors, possibly by acting as a direct antagonistic ligand to RNF43 and ZNRF3. The chain is R-spondin-3 (Rspo3) from Mus musculus (Mouse).